The primary structure comprises 92 residues: Integration host factor subunit beta (92 aa).

Belongs to the bacterial histone-like protein family. Heterodimer of an alpha and a beta chain.

This protein is one of the two subunits of integration host factor, a specific DNA-binding protein that functions in genetic recombination as well as in transcriptional and translational control. The sequence is that of Integration host factor subunit beta from Azotobacter vinelandii (strain DJ / ATCC BAA-1303).